Here is a 231-residue protein sequence, read N- to C-terminus: AA9 family lytic polysaccharide monooxygenase C (231 aa).

The first 18 residues, 1-18 (MKSGLLFTTASLALTASA), serve as a signal peptide directing secretion. Cu(2+) is bound at residue histidine 19. Cysteines 60 and 179 form a disulfide. Residues asparagine 69 and asparagine 143 are each glycosylated (N-linked (GlcNAc...) asparagine). Residues histidine 165 and glutamine 174 each contribute to the O2 site. Tyrosine 176 is a binding site for Cu(2+).

This sequence belongs to the polysaccharide monooxygenase AA9 family. Cu(2+) is required as a cofactor.

The protein resides in the secreted. It carries out the reaction [(1-&gt;4)-beta-D-glucosyl]n+m + reduced acceptor + O2 = 4-dehydro-beta-D-glucosyl-[(1-&gt;4)-beta-D-glucosyl]n-1 + [(1-&gt;4)-beta-D-glucosyl]m + acceptor + H2O.. Lytic polysaccharide monooxygenase (LPMO) that depolymerizes crystalline and amorphous polysaccharides via the oxidation of scissile alpha- or beta-(1-4)-glycosidic bonds, yielding C1 oxidation products. Catalysis by LPMOs requires the reduction of the active-site copper from Cu(II) to Cu(I) by a reducing agent and H(2)O(2) or O(2) as a cosubstrate. The protein is AA9 family lytic polysaccharide monooxygenase C of Emericella nidulans (strain FGSC A4 / ATCC 38163 / CBS 112.46 / NRRL 194 / M139) (Aspergillus nidulans).